Reading from the N-terminus, the 131-residue chain is Large ribosomal subunit protein bL12 (131 aa).

This sequence belongs to the bacterial ribosomal protein bL12 family. In terms of assembly, homodimer. Part of the ribosomal stalk of the 50S ribosomal subunit. Forms a multimeric L10(L12)X complex, where L10 forms an elongated spine to which 2 to 4 L12 dimers bind in a sequential fashion. Binds GTP-bound translation factors.

Functionally, forms part of the ribosomal stalk which helps the ribosome interact with GTP-bound translation factors. Is thus essential for accurate translation. In Prochlorococcus marinus (strain NATL2A), this protein is Large ribosomal subunit protein bL12.